The sequence spans 474 residues: uncharacterized protein (474 aa).

The next 10 helical transmembrane spans lie at 17 to 39 (ILGG…SVYY), 44 to 61 (FLNF…GFVL), 81 to 103 (LAWL…YFSY), 144 to 166 (GVGI…YLLY), 186 to 208 (IIWI…GLSF), 239 to 256 (IVMI…FSIH), 268 to 286 (IQTK…IISI), 319 to 341 (LSLF…TGGV), 385 to 407 (AFVV…IALG), and 444 to 466 (IIAM…TLYF).

Belongs to the TrkH potassium transport family.

It is found in the cell membrane. This is an uncharacterized protein from Methanocaldococcus jannaschii (strain ATCC 43067 / DSM 2661 / JAL-1 / JCM 10045 / NBRC 100440) (Methanococcus jannaschii).